Here is a 629-residue protein sequence, read N- to C-terminus: tRNA uridine 5-carboxymethylaminomethyl modification enzyme MnmG (629 aa).

FAD contacts are provided by residues 13-18 (GGGHAG), Val-125, and Ser-180. Position 273-287 (273-287 (GPRYCPSIEDKIHRF)) interacts with NAD(+). Gln-370 serves as a coordination point for FAD.

The protein belongs to the MnmG family. In terms of assembly, homodimer. Heterotetramer of two MnmE and two MnmG subunits. The cofactor is FAD.

The protein resides in the cytoplasm. Functionally, NAD-binding protein involved in the addition of a carboxymethylaminomethyl (cmnm) group at the wobble position (U34) of certain tRNAs, forming tRNA-cmnm(5)s(2)U34. This Shewanella sp. (strain MR-7) protein is tRNA uridine 5-carboxymethylaminomethyl modification enzyme MnmG.